A 649-amino-acid polypeptide reads, in one-letter code: 1-deoxy-D-xylulose-5-phosphate synthase 1 (649 aa).

Thiamine diphosphate contacts are provided by residues His-79 and Ala-120–Ser-122. Mg(2+) is bound at residue Asp-151. Thiamine diphosphate-binding positions include Gly-152–Ser-153, Asn-180, Tyr-289, and Glu-371. Asn-180 is a binding site for Mg(2+).

This sequence belongs to the transketolase family. DXPS subfamily. Homodimer. It depends on Mg(2+) as a cofactor. Requires thiamine diphosphate as cofactor.

The catalysed reaction is D-glyceraldehyde 3-phosphate + pyruvate + H(+) = 1-deoxy-D-xylulose 5-phosphate + CO2. It participates in metabolic intermediate biosynthesis; 1-deoxy-D-xylulose 5-phosphate biosynthesis; 1-deoxy-D-xylulose 5-phosphate from D-glyceraldehyde 3-phosphate and pyruvate: step 1/1. Its function is as follows. Catalyzes the acyloin condensation reaction between C atoms 2 and 3 of pyruvate and glyceraldehyde 3-phosphate to yield 1-deoxy-D-xylulose-5-phosphate (DXP). The chain is 1-deoxy-D-xylulose-5-phosphate synthase 1 from Zymomonas mobilis subsp. mobilis (strain ATCC 31821 / ZM4 / CP4).